A 455-amino-acid polypeptide reads, in one-letter code: Probable pectate lyase 6 (455 aa).

Residues 1 to 25 (MVNLGSYVFVFVALSLTVVVPSVQA) form the signal peptide. N-linked (GlcNAc...) asparagine glycans are attached at residues Asn-55 and Asn-75. Ca(2+) contacts are provided by Asp-247, Asp-271, and Asp-275. Arg-327 is an active-site residue.

The protein belongs to the polysaccharide lyase 1 family. Ca(2+) serves as cofactor.

It catalyses the reaction Eliminative cleavage of (1-&gt;4)-alpha-D-galacturonan to give oligosaccharides with 4-deoxy-alpha-D-galact-4-enuronosyl groups at their non-reducing ends.. It participates in glycan metabolism; pectin degradation; 2-dehydro-3-deoxy-D-gluconate from pectin: step 2/5. This Arabidopsis thaliana (Mouse-ear cress) protein is Probable pectate lyase 6.